A 77-amino-acid chain; its full sequence is Putative regulatory protein tsl2331 (77 aa).

This sequence belongs to the RemA family.

The chain is Putative regulatory protein tsl2331 from Thermosynechococcus vestitus (strain NIES-2133 / IAM M-273 / BP-1).